The primary structure comprises 179 residues: Large ribosomal subunit protein uL5 (179 aa).

This sequence belongs to the universal ribosomal protein uL5 family. In terms of assembly, part of the 50S ribosomal subunit; part of the 5S rRNA/L5/L18/L25 subcomplex. Contacts the 5S rRNA and the P site tRNA. Forms a bridge to the 30S subunit in the 70S ribosome.

In terms of biological role, this is one of the proteins that bind and probably mediate the attachment of the 5S RNA into the large ribosomal subunit, where it forms part of the central protuberance. In the 70S ribosome it contacts protein S13 of the 30S subunit (bridge B1b), connecting the 2 subunits; this bridge is implicated in subunit movement. Contacts the P site tRNA; the 5S rRNA and some of its associated proteins might help stabilize positioning of ribosome-bound tRNAs. This Nitratidesulfovibrio vulgaris (strain ATCC 29579 / DSM 644 / CCUG 34227 / NCIMB 8303 / VKM B-1760 / Hildenborough) (Desulfovibrio vulgaris) protein is Large ribosomal subunit protein uL5.